The sequence spans 573 residues: Methionine--tRNA ligase (573 aa).

The 'HIGH' region signature appears at 11-21; sequence PYINGIKHLGN. 4 residues coordinate Zn(2+): Cys-143, Cys-146, Cys-156, and Cys-159. A 'KMSKS' region motif is present at residues 346–350; it reads QFSTS. Thr-349 contributes to the ATP binding site.

This sequence belongs to the class-I aminoacyl-tRNA synthetase family. MetG type 1 subfamily. As to quaternary structure, monomer. The cofactor is Zn(2+).

Its subcellular location is the cytoplasm. It carries out the reaction tRNA(Met) + L-methionine + ATP = L-methionyl-tRNA(Met) + AMP + diphosphate. Functionally, is required not only for elongation of protein synthesis but also for the initiation of all mRNA translation through initiator tRNA(fMet) aminoacylation. This chain is Methionine--tRNA ligase, found in Ruegeria sp. (strain TM1040) (Silicibacter sp.).